Reading from the N-terminus, the 278-residue chain is 4-diphosphocytidyl-2-C-methyl-D-erythritol kinase (278 aa).

The active site involves lysine 9. 93 to 103 is a binding site for ATP; it reads PLGGGLGGGSS. Aspartate 135 is a catalytic residue.

Belongs to the GHMP kinase family. IspE subfamily.

The enzyme catalyses 4-CDP-2-C-methyl-D-erythritol + ATP = 4-CDP-2-C-methyl-D-erythritol 2-phosphate + ADP + H(+). The protein operates within isoprenoid biosynthesis; isopentenyl diphosphate biosynthesis via DXP pathway; isopentenyl diphosphate from 1-deoxy-D-xylulose 5-phosphate: step 3/6. Its function is as follows. Catalyzes the phosphorylation of the position 2 hydroxy group of 4-diphosphocytidyl-2C-methyl-D-erythritol. The sequence is that of 4-diphosphocytidyl-2-C-methyl-D-erythritol kinase from Nitrosomonas europaea (strain ATCC 19718 / CIP 103999 / KCTC 2705 / NBRC 14298).